The primary structure comprises 1387 residues: Regulator of G-protein signaling 12 (1387 aa).

One can recognise a PDZ domain in the interval 21-97 (SVEVARGRAG…GVLRMVISEG (77 aa)). Phosphoserine occurs at positions 171 and 194. Lysine 195 is covalently cross-linked (Glycyl lysine isopeptide (Lys-Gly) (interchain with G-Cter in SUMO2)). The region spanning 227–339 (VAMVVGYLGS…GALRTSCHVF (113 aa)) is the PID domain. Disordered stretches follow at residues 409 to 428 (ADAHQNNSTSSNSDSGIGNF) and 442 to 488 (LGGG…PLET). Polar residues predominate over residues 412–428 (HQNNSTSSNSDSGIGNF). Residues arginine 524 and arginine 633 each carry the omega-N-methylarginine modification. The tract at residues 620-650 (RKTKEDKKSSKLGRGVALAQTSQRTSARRSF) is disordered. Serine 661 and serine 671 each carry phosphoserine. The RGS domain occupies 715-832 (SFERLLQDPV…LKSQLYQECV (118 aa)). Residues 842-934 (PDSQQVPSSP…ANGGLCRRES (93 aa)) are disordered. A compositionally biased stretch (low complexity) spans 849–869 (SSPASKHSISSDHSNVSTPKK). Phosphoserine occurs at positions 850 and 879. Residues 914 to 923 (DHGDHAHDAL) show a composition bias toward basic and acidic residues. Serine 943 carries the post-translational modification Phosphoserine. RBD domains follow at residues 962–1032 (KHCC…LGKR) and 1034–1104 (LFRL…LEER). The segment covering 1103–1117 (ERDPSRGKVSTEKQK) has biased composition (basic and acidic residues). The interval 1103 to 1168 (ERDPSRGKVS…ARDPRLSKRE (66 aa)) is disordered. The segment covering 1122–1133 (KQSSAVNSSPRN) has biased composition (polar residues). Over residues 1151–1168 (IRGENGKSARDPRLSKRE) the composition is skewed to basic and acidic residues. The GoLoco domain occupies 1187 to 1209 (AEEFFELISKAQSNRADDQRGLL). Disordered stretches follow at residues 1224 to 1325 (PGSS…EGTT) and 1349 to 1387 (ADLTLMGEGDISSPNSTLLPPPPLPQDTPGPTRPGTSRF). Positions 1261 to 1280 (SDSPATSPASAQSPCSAYSP) are enriched in low complexity. A compositionally biased stretch (polar residues) spans 1315-1325 (SCISTVQEGTT). The segment covering 1367–1380 (LPPPPLPQDTPGPT) has biased composition (pro residues).

Interacts with GNAI1, GNAI2 and GNAI3; the interactions are GDP-dependent. As to expression, detected in brain cortex GABAergic neurons, in striatum and substantia nigra, and in the Purkinje cell layer in the cerebellum and hippocampus (at protein level). Expressed at high levels in brain and lung and lower levels in testis, heart, and spleen.

Its subcellular location is the nucleus. It is found in the cytoplasm. The protein resides in the cell projection. It localises to the dendrite. The protein localises to the synapse. In terms of biological role, regulates G protein-coupled receptor signaling cascades. Inhibits signal transduction by increasing the GTPase activity of G protein alpha subunits, thereby driving them into their inactive GDP-bound form. In Rattus norvegicus (Rat), this protein is Regulator of G-protein signaling 12 (Rgs12).